Here is a 548-residue protein sequence, read N- to C-terminus: Sesquiterpene synthase TPS1 (548 aa).

(2E,6E)-farnesyl diphosphate is bound by residues Arg-264, Asp-301, Asp-305, Arg-442, and Asp-445. Mg(2+) contacts are provided by Asp-301 and Asp-305. Residues 301–305 carry the DDXXD motif motif; it reads DDTYD. Asp-445 and Glu-453 together coordinate Mg(2+).

It belongs to the terpene synthase family. Tpsa subfamily. In terms of assembly, monomer. Mg(2+) serves as cofactor. In terms of tissue distribution, expressed in leaves and stems.

The protein resides in the cytoplasm. It carries out the reaction (2E,6E)-farnesyl diphosphate = germacrene D + diphosphate. The enzyme catalyses (2E,6E)-farnesyl diphosphate = (-)-(E)-beta-caryophyllene + diphosphate. It catalyses the reaction (2E,6E)-farnesyl diphosphate = beta-copaene + diphosphate. It functions in the pathway secondary metabolite biosynthesis; terpenoid biosynthesis. Its function is as follows. Sesquiterpene synthase involved in the biosynthesis of volatile compounds. Mediates the conversion of (2E,6E)-farnesyl diphosphate (FPP) into germacrene D, (-)-(E)-beta-caryophyllene and beta-copaene. The polypeptide is Sesquiterpene synthase TPS1 (Xanthium strumarium (Rough cocklebur)).